A 535-amino-acid chain; its full sequence is Sodium/hydrogen exchanger 1 (535 aa).

Topologically, residues 1-21 are cytoplasmic; that stretch reads MGMEVAAARLGALYTTSDYAS. A helical transmembrane segment spans residues 22–42; the sequence is VVSINLFVALLCACIVLGHLL. At 43-46 the chain is on the vacuolar side; that stretch reads EENR. The helical transmembrane segment at 47–67 threads the bilayer; that stretch reads WVNESITALIIGLCTGVVILL. Residues 68 to 75 are Cytoplasmic-facing; it reads MTKGKSSH. The helical transmembrane segment at 76–96 threads the bilayer; it reads LFVFSEDLFFIYLLPPIIFNA. At 97–114 the chain is on the vacuolar side; the sequence is GFQVKKKQFFRNFMTITL. The helical transmembrane segment at 115–135 threads the bilayer; that stretch reads FGAVGTMISFFTISIAAIAIF. Topologically, residues 136–137 are cytoplasmic; sequence SR. A helical transmembrane segment spans residues 138-158; sequence MNIGTLDVGDFLAIGAIFSAT. Residues 159–173 lie on the Vacuolar side of the membrane; sequence DSVCTLQVLNQDETP. A helical membrane pass occupies residues 174–194; that stretch reads FLYSLVFGEGVVNDATSIVLF. Residues 195–218 lie on the Cytoplasmic side of the membrane; sequence NALQNFDLVHIDAAVVLKFLGNFF. Residues 219–239 form a helical membrane-spanning segment; it reads YLFLSSTFLGVFAGLLSAYII. The Vacuolar portion of the chain corresponds to 240 to 264; sequence KKLYIGRHSTDREVALMMLMAYLSY. Residues 265–285 form a helical membrane-spanning segment; sequence MLAELLDLSGILTVFFCGIVM. Residues 286 to 304 lie on the Cytoplasmic side of the membrane; the sequence is SHYTWHNVTESSRVTTKHA. Residues 305–325 traverse the membrane as a helical segment; sequence FATLSFIAETFLFLYVGMDAL. At 326–344 the chain is on the vacuolar side; sequence DIEKWEFASDRPGKSIGIS. A helical transmembrane segment spans residues 345 to 365; sequence SILLGLVLIGRAAFVFPLSFL. Residues 366-381 lie on the Cytoplasmic side of the membrane; that stretch reads SNLTKKAPNEKITWRQ. The helical transmembrane segment at 382 to 402 threads the bilayer; sequence QVVIWWAGLMRGAVSIALAYN. Residues 403–415 are Vacuolar-facing; the sequence is KFTRSGHTQLHGN. The helical transmembrane segment at 416–436 threads the bilayer; the sequence is AIMITSTITVVLFSTMVFGMM. At 437 to 535 the chain is on the cytoplasmic side; that stretch reads TKPLIRLLLP…SPTEQSHGGR (99 aa). Residues 452-478 form a disordered region; sequence VTSEPSSPKSLHSPLLTSMQGSDLEST. A compositionally biased stretch (low complexity) spans 454-469; sequence SEPSSPKSLHSPLLTS.

The protein belongs to the monovalent cation:proton antiporter 1 (CPA1) transporter (TC 2.A.36) family.

It is found in the vacuole membrane. It catalyses the reaction Na(+)(in) + H(+)(out) = Na(+)(out) + H(+)(in). The enzyme catalyses K(+)(in) + H(+)(out) = K(+)(out) + H(+)(in). Its function is as follows. Vacuolar antiporter that acts in low affinity electroneutral exchange of protons H(+) for cations such as Na(+) or K(+) across membranes. Plays important roles in the transport of Na(+) and K(+) accumulated in the cytoplasm into vacuoles, and is involved in salt stress tolerance. This Oryza sativa subsp. japonica (Rice) protein is Sodium/hydrogen exchanger 1.